A 467-amino-acid chain; its full sequence is Glutamate--tRNA ligase 2 (467 aa).

A 'HIGH' region motif is present at residues 18 to 28 (PSPTGYLHVGG). A 'KMSKS' region motif is present at residues 238-242 (PLSKR). Position 241 (lysine 241) interacts with ATP.

This sequence belongs to the class-I aminoacyl-tRNA synthetase family. Glutamate--tRNA ligase type 1 subfamily. As to quaternary structure, monomer.

It is found in the cytoplasm. It catalyses the reaction tRNA(Glu) + L-glutamate + ATP = L-glutamyl-tRNA(Glu) + AMP + diphosphate. Its function is as follows. Catalyzes the attachment of glutamate to tRNA(Glu) in a two-step reaction: glutamate is first activated by ATP to form Glu-AMP and then transferred to the acceptor end of tRNA(Glu). In Fervidobacterium nodosum (strain ATCC 35602 / DSM 5306 / Rt17-B1), this protein is Glutamate--tRNA ligase 2.